Reading from the N-terminus, the 900-residue chain is Exosome complex component 10 homolog (900 aa).

Disordered stretches follow at residues 1-31 (MPRT…SEDV) and 147-174 (TSIE…TGTP). A compositionally biased stretch (basic and acidic residues) spans 8–28 (VHQEAKEESAQADQPPKKSAS). A 3'-5' exonuclease domain is found at 273–438 (VVDTVEKLKQ…YVYGRMTNDL (166 aa)). Positions 296, 298, 354, and 423 each coordinate Mg(2+). The 81-residue stretch at 485-565 (DNRQLYALRG…LKARDQPLVK (81 aa)) folds into the HRDC domain. Residues 731 to 900 (EQLKRKHPQA…FSNVRKEGKK (170 aa)) are disordered. Residues 809 to 826 (RKQKKNQFQRGFKAKNRG) show a composition bias toward basic residues. The segment covering 878-887 (NNRNNKQFNK) has biased composition (low complexity).

Belongs to the exosome component 10/RRP6 family. In terms of assembly, component of the RNA exosome complex. Interacts with spn-A/Rad51; the interaction is required for the recruitment of spn-A to the DNA-damage response foci. Interacts with Su(var)3-9, a heterochromatin factor; the interaction promotes association of Rrp6 with a subset of genomic loci. Interacts with Su(var)205, a heterochromatin factor. Interacts with HDAC1, a heterochromatin factor. Mg(2+) serves as cofactor. As to expression, salivary gland (at protein level).

It is found in the nucleus. The protein localises to the chromosome. Its subcellular location is the cytoplasm. It localises to the cell cortex. The protein resides in the cytoskeleton. It is found in the microtubule organizing center. The protein localises to the centrosome. Its subcellular location is the spindle. It localises to the midbody. In terms of biological role, catalytic component of the RNA exosome complex which has 3'-&gt;5' exoribonuclease activity and participates in a multitude of cellular RNA processing and degradation events. Degrades a large variety of non-coding RNAs that are processed by the exosome, such as pre-rRNAs and some small nucleolar RNAs (snoRNAs). Degrades transcripts derived from different types of heterochromatic repeats, such as subtelomeric minisatellites and simple gagaa repeats. Degrades transcripts derived from transposons and transposon fragments. Degrades chromatin-associated transcripts and contributes to the compaction of heterochromatin. Required for the efficient repair of DNA double-strand breaks via homologous recombination after irradiation. Required for cell proliferation and error-free mitosis. This is Exosome complex component 10 homolog from Drosophila melanogaster (Fruit fly).